The primary structure comprises 377 residues: Opsin, blue-sensitive (377 aa).

Over 1 to 56 (MLLHNKTLAGKALAFIAEEGYVPSMREKFLGWNVPPEYSDLVHPHWRAFPAPGKHF) the chain is Extracellular. An N-linked (GlcNAc...) asparagine glycan is attached at N5. Residues 57–81 (HIGLAIIYSMLLIMSLVGNCCVIWI) traverse the membrane as a helical segment. Topologically, residues 82–93 (FSTSKSLRTPSN) are cytoplasmic. A helical transmembrane segment spans residues 94 to 119 (MFIVSLAIFDIIMAFEMPMLVISSFM). Residues 120-132 (ERMIGWEIGCDVY) are Extracellular-facing. The cysteines at positions 129 and 206 are disulfide-linked. A helical transmembrane segment spans residues 133 to 152 (SVFGSISGMGQAMTNAAIAF). Topologically, residues 153 to 170 (DRYRTISCPIDGRLNSKQ) are cytoplasmic. The chain crosses the membrane as a helical span at residues 171–195 (AAVIIAFTWFWVTPFTVLPLLKVWG). Topologically, residues 196–219 (RYTTEGFLTTCSFDFLTDDEDTKV) are extracellular. Residues 220–247 (FVTCIFIWAYVIPLIFIILFYSRLLSSI) form a helical membrane-spanning segment. The Cytoplasmic portion of the chain corresponds to 248–282 (RNHEKMLREQAKKMNVKSLVSNQDKERSAEVRIAK). The chain crosses the membrane as a helical span at residues 283 to 306 (VAFTIFFLFLLAWTPYATVALIGV). Residues 307–314 (YGNRELLT) are Extracellular-facing. Residues 315-339 (PVSTMLPAVFAKTVSCIDPWIYAIN) form a helical membrane-spanning segment. K326 carries the post-translational modification N6-(retinylidene)lysine. Over 340-377 (HPRYRQELQKRCKWMGIHEPETTSDATSAQTEKIKTDE) the chain is Cytoplasmic.

It belongs to the G-protein coupled receptor 1 family. Opsin subfamily. In terms of processing, phosphorylated on some or all of the serine and threonine residues present in the C-terminal region. In terms of tissue distribution, expressed in the dorsal region of the retina and sparsely expressed in the ventral region.

Its subcellular location is the membrane. Functionally, visual pigments are the light-absorbing molecules that mediate vision. They consist of an apoprotein, opsin, covalently linked to 11-cis-retinal. In Apis mellifera (Honeybee), this protein is Opsin, blue-sensitive (BLOP).